A 122-amino-acid polypeptide reads, in one-letter code: Large ribosomal subunit protein uL14 (122 aa).

Belongs to the universal ribosomal protein uL14 family. Part of the 50S ribosomal subunit. Forms a cluster with proteins L3 and L19. In the 70S ribosome, L14 and L19 interact and together make contacts with the 16S rRNA in bridges B5 and B8.

Binds to 23S rRNA. Forms part of two intersubunit bridges in the 70S ribosome. The protein is Large ribosomal subunit protein uL14 of Rickettsia bellii (strain OSU 85-389).